A 314-amino-acid chain; its full sequence is F-box protein AUF2 (314 aa).

Positions 1-49 (MDVFDGLPDPIIVDILNKVGDVKTLLRCSSLSKRFNSLVPQSESLTLRL) constitute an F-box domain.

As to quaternary structure, part of a SCF (ASK-cullin-F-box) protein ligase complex.

It is found in the nucleus. It functions in the pathway protein modification; protein ubiquitination. Component of SCF(ASK-cullin-F-box) E3 ubiquitin ligase complexes, which may mediate the ubiquitination and subsequent proteasomal degradation of target proteins. The polypeptide is F-box protein AUF2 (Arabidopsis thaliana (Mouse-ear cress)).